We begin with the raw amino-acid sequence, 727 residues long: FACT complex subunit Ssrp1 (727 aa).

2 disordered regions span residues A458–L565 and E596–D727. Acidic residues-rich tracts occupy residues E464–D479 and N487–D508. Over residues S510–D519 the composition is skewed to gly residues. 3 stretches are compositionally biased toward basic and acidic residues: residues K529–K555, E596–N620, and D675–S703. Positions P556–K622 form a DNA-binding region, HMG box. Acidic residues predominate over residues E704–D727.

The protein belongs to the SSRP1 family. As to quaternary structure, component of the FACT complex, a stable heterodimer of dre4/spt16 and Ssrp.

It localises to the nucleus. The protein localises to the chromosome. It is found in the nucleolus. Functionally, component of the FACT complex, a general chromatin factor that acts to reorganize nucleosomes. The FACT complex is involved in multiple processes that require DNA as a template such as mRNA elongation, DNA replication and DNA repair. During transcription elongation the FACT complex acts as a histone chaperone that both destabilizes and restores nucleosomal structure. It facilitates the passage of RNA polymerase II and transcription by promoting the dissociation of one histone H2A-H2B dimer from the nucleosome, then subsequently promotes the reestablishment of the nucleosome following the passage of RNA polymerase II. Binds specifically to single-stranded DNA and RNA with highest affinity for nucleotides G and U. The FACT complex is required for expression of Hox genes. The chain is FACT complex subunit Ssrp1 (Ssrp) from Drosophila pseudoobscura pseudoobscura (Fruit fly).